The chain runs to 583 residues: Proteasome-associated ATPase (583 aa).

A coiled-coil region spans residues 2-90 (ASREDRDAAN…REEVDRLAQP (89 aa)). Position 271-276 (271-276 (GCGKTL)) interacts with ATP. The tract at residues 582 to 583 (YL) is docks into pockets in the proteasome alpha-ring.

Belongs to the AAA ATPase family. Homohexamer. Assembles into a hexameric ring structure that caps the 20S proteasome core. Strongly interacts with the prokaryotic ubiquitin-like protein Pup through a hydrophobic interface; the interacting region of ARC lies in its N-terminal coiled-coil domain. There is one Pup binding site per ARC hexamer ring. Upon ATP-binding, the C-terminus of ARC interacts with the alpha-rings of the proteasome core, possibly by binding to the intersubunit pockets.

The protein operates within protein degradation; proteasomal Pup-dependent pathway. Its function is as follows. ATPase which is responsible for recognizing, binding, unfolding and translocation of pupylated proteins into the bacterial 20S proteasome core particle. May be essential for opening the gate of the 20S proteasome via an interaction with its C-terminus, thereby allowing substrate entry and access to the site of proteolysis. Thus, the C-termini of the proteasomal ATPase may function like a 'key in a lock' to induce gate opening and therefore regulate proteolysis. This is Proteasome-associated ATPase from Acidothermus cellulolyticus (strain ATCC 43068 / DSM 8971 / 11B).